Consider the following 296-residue polypeptide: 4-hydroxy-tetrahydrodipicolinate synthase (296 aa).

Threonine 49 provides a ligand contact to pyruvate. Residue tyrosine 137 is the Proton donor/acceptor of the active site. The active-site Schiff-base intermediate with substrate is lysine 166. A pyruvate-binding site is contributed by isoleucine 208.

This sequence belongs to the DapA family. As to quaternary structure, homotetramer; dimer of dimers.

It is found in the cytoplasm. The catalysed reaction is L-aspartate 4-semialdehyde + pyruvate = (2S,4S)-4-hydroxy-2,3,4,5-tetrahydrodipicolinate + H2O + H(+). It functions in the pathway amino-acid biosynthesis; L-lysine biosynthesis via DAP pathway; (S)-tetrahydrodipicolinate from L-aspartate: step 3/4. Catalyzes the condensation of (S)-aspartate-beta-semialdehyde [(S)-ASA] and pyruvate to 4-hydroxy-tetrahydrodipicolinate (HTPA). The chain is 4-hydroxy-tetrahydrodipicolinate synthase from Azobacteroides pseudotrichonymphae genomovar. CFP2.